Here is a 79-residue protein sequence, read N- to C-terminus: UPF0154 protein SAK_1616 (79 aa).

A helical transmembrane segment spans residues 5–25; the sequence is IWILLIIVALFGGLVGGIFIA.

It belongs to the UPF0154 family.

It localises to the cell membrane. This Streptococcus agalactiae serotype Ia (strain ATCC 27591 / A909 / CDC SS700) protein is UPF0154 protein SAK_1616.